A 569-amino-acid polypeptide reads, in one-letter code: Potassium-transporting ATPase potassium-binding subunit (569 aa).

10 helical membrane passes run 3-23 (LMEY…SPVL), 68-88 (AASL…VLML), 136-156 (VGLA…AVAV), 179-199 (VLYV…GQGV), 259-279 (LQML…GEAV), 284-304 (HAWT…LSLY), 384-404 (GLYG…LMVG), 422-442 (AMLA…VAAV), 490-510 (LALA…GVAG), and 534-554 (LLLT…ALAL).

The protein belongs to the KdpA family. In terms of assembly, the system is composed of three essential subunits: KdpA, KdpB and KdpC.

The protein localises to the cell inner membrane. In terms of biological role, part of the high-affinity ATP-driven potassium transport (or Kdp) system, which catalyzes the hydrolysis of ATP coupled with the electrogenic transport of potassium into the cytoplasm. This subunit binds the periplasmic potassium ions and delivers the ions to the membrane domain of KdpB through an intramembrane tunnel. This is Potassium-transporting ATPase potassium-binding subunit from Nitratidesulfovibrio vulgaris (strain DP4) (Desulfovibrio vulgaris).